The sequence spans 485 residues: Velvet complex subunit B (485 aa).

The Velvet domain occupies 33–459 (GRKHYSLEVV…GNQGQKLPLA (427 aa)). The interval 107-353 (VLHPSSVDRH…PPPPRHTYTR (247 aa)) is disordered. 4 stretches are compositionally biased toward polar residues: residues 134–155 (APQSRAPANQTPSGGSTPTLSQ), 234–243 (RSPSSSTSDH), 267–304 (SISSYSNSQVDPSVRNHSNSEGIENPGWSSSEATSPHS), and 326–341 (THSQMAPGTCSSQHVS).

The protein belongs to the velvet family. VelB subfamily. In terms of assembly, component of the heterotrimeric velvet complex composed of laeA, veA and velB; VeA acting as a bridging protein between laeA and velB. Forms a heterodimeric complex with vosA; the formation of the velB-vosA complex is light-dependent.

It is found in the nucleus. It localises to the cytoplasm. Functionally, component of the velvet transcription factor complex that controls sexual/asexual developmental ratio in response to light, promoting sexual development in the darkness while stimulating asexual sporulation under illumination. The velvet complex acts as a global regulator for secondary metabolite gene expression. Component of the velB-VosA heterodimeric complex that plays a dual role in activating genes associated with spore maturation and repressing certain development-associated genes. The velB-VosA complex binds DNA through the DNA-binding domain of vosA that recognizes an 11-nucleotide consensus sequence 5'-CTGGCCGCGGC-3' consisting of two motifs in the promoters of key developmental regulatory genes. This is Velvet complex subunit B from Laccaria bicolor (strain S238N-H82 / ATCC MYA-4686) (Bicoloured deceiver).